Here is a 294-residue protein sequence, read N- to C-terminus: Elongation factor Ts (294 aa).

Residues 80-83 (TDFV) are involved in Mg(2+) ion dislocation from EF-Tu.

The protein belongs to the EF-Ts family.

Its subcellular location is the cytoplasm. In terms of biological role, associates with the EF-Tu.GDP complex and induces the exchange of GDP to GTP. It remains bound to the aminoacyl-tRNA.EF-Tu.GTP complex up to the GTP hydrolysis stage on the ribosome. The polypeptide is Elongation factor Ts (Listeria innocua serovar 6a (strain ATCC BAA-680 / CLIP 11262)).